The primary structure comprises 245 residues: MAAKPKPLDAEIEALELDARYGHLAAEAIVELAVNRFRDEGGIATVSSFGADSAVLLHMVASVDKSLPVLFLDTGQHFGETIEYRDQLASDLGLSNLVVVHPKSEMLSARDPGNDLHKSDSDLCCEIRKVEPMARAVEPYSAWFTGRKRHQAESRAQMPVFEAVGPRIRINPLARWTTADQAAYMRANDLRENPLVAYGYLSIGCFPCTQPVKPGEDQRSGRWAGLAKTECGIHLPGLEALTNAA.

Residues Cys-124, Cys-125, Cys-205, and Cys-208 each contribute to the [4Fe-4S] cluster site. Cys-231 acts as the Nucleophile; cysteine thiosulfonate intermediate in catalysis.

It belongs to the PAPS reductase family. CysH subfamily. [4Fe-4S] cluster is required as a cofactor.

It localises to the cytoplasm. The enzyme catalyses [thioredoxin]-disulfide + sulfite + AMP + 2 H(+) = adenosine 5'-phosphosulfate + [thioredoxin]-dithiol. The protein operates within sulfur metabolism; hydrogen sulfide biosynthesis; sulfite from sulfate. Its function is as follows. Catalyzes the formation of sulfite from adenosine 5'-phosphosulfate (APS) using thioredoxin as an electron donor. The protein is Adenosine 5'-phosphosulfate reductase of Chelativorans sp. (strain BNC1).